The primary structure comprises 185 residues: Elongation factor P (185 aa).

Belongs to the elongation factor P family.

Its subcellular location is the cytoplasm. It functions in the pathway protein biosynthesis; polypeptide chain elongation. Functionally, involved in peptide bond synthesis. Stimulates efficient translation and peptide-bond synthesis on native or reconstituted 70S ribosomes in vitro. Probably functions indirectly by altering the affinity of the ribosome for aminoacyl-tRNA, thus increasing their reactivity as acceptors for peptidyl transferase. The protein is Elongation factor P of Clostridium kluyveri (strain ATCC 8527 / DSM 555 / NBRC 12016 / NCIMB 10680 / K1).